Consider the following 330-residue polypeptide: MENSIILPIIIIAAVLIALAILFTFVPVALWISALAAGVKISIFTLIGMRLRRVVPNRVINPLIKAHKAGLNVKTNQLESHYLAGGNVDRVVNALIAAHRANIDLPFERGAAIDLAGRDVLEAVQMSVNPKVIETPFIAGIAMDGIEVKALARITVRANIDRLVGGAGEETIIARVGEGVVSTIGSSDHHKQVLENPDSISQTVLSKGLDSGTAFEILSIDIADVDIGKNIGAILQTDQAEADKNIAQAKAEERRAMAVAQEQEMVARVQEMRAKVVEAEADVPLALAEALRSGKMGVMDYMNYQNIDADTDMRDSIGKLSKENKDDDQQ.

Helical transmembrane passes span isoleucine 5–phenylalanine 25 and valine 28–glycine 48.

Belongs to the flotillin-like FloA family. As to quaternary structure, homooligomerizes.

Its subcellular location is the cell membrane. The protein resides in the membrane raft. In terms of biological role, found in functional membrane microdomains (FMM) that may be equivalent to eukaryotic membrane rafts. FMMs are highly dynamic and increase in number as cells age. Flotillins are thought to be important factors in membrane fluidity. In Oceanobacillus iheyensis (strain DSM 14371 / CIP 107618 / JCM 11309 / KCTC 3954 / HTE831), this protein is Flotillin-like protein FloA.